A 122-amino-acid chain; its full sequence is Class I hydrophobin 2 (122 aa).

The N-terminal stretch at 1 to 22 (MFARVSTLFAMFFLGLALMVSA) is a signal peptide. 4 cysteine pairs are disulfide-bonded: Cys40-Cys101, Cys47-Cys95, Cys48-Cys81, and Cys102-Cys115.

The protein belongs to the fungal hydrophobin family. In terms of assembly, self-assembles to form functional amyloid fibrils called rodlets. Self-assembly into fibrillar rodlets occurs spontaneously at hydrophobic:hydrophilic interfaces and the rodlets further associate laterally to form amphipathic monolayers.

The protein localises to the secreted. Its subcellular location is the cell wall. In terms of biological role, aerial growth, conidiation, and dispersal of filamentous fungi in the environment rely upon a capability of their secreting small amphipathic proteins called hydrophobins (HPBs) with low sequence identity. Class I can self-assemble into an outermost layer of rodlet bundles on aerial cell surfaces, conferring cellular hydrophobicity that supports fungal growth, development and dispersal; whereas Class II form highly ordered films at water-air interfaces through intermolecular interactions but contribute nothing to the rodlet structure. Hah2 is a class I hydrophobin that is involved in aerial growth of mycelia, but does not play a role in pathogenesis. This is Class I hydrophobin 2 from Heterobasidion annosum (Root rot fungus).